Consider the following 154-residue polypeptide: Myoglobin (154 aa).

The 147-residue stretch at 2–148 (GLSDQEWQHV…FRNDMASKYK (147 aa)) folds into the Globin domain. Residue His-65 coordinates nitrite. Residue His-65 coordinates O2. His-94 is a binding site for heme b.

This sequence belongs to the globin family. Monomeric.

The protein resides in the cytoplasm. The protein localises to the sarcoplasm. The catalysed reaction is Fe(III)-heme b-[protein] + nitric oxide + H2O = Fe(II)-heme b-[protein] + nitrite + 2 H(+). It catalyses the reaction H2O2 + AH2 = A + 2 H2O. Its function is as follows. Monomeric heme protein which primary function is to store oxygen and facilitate its diffusion within muscle tissues. Reversibly binds oxygen through a pentacoordinated heme iron and enables its timely and efficient release as needed during periods of heightened demand. Depending on the oxidative conditions of tissues and cells, and in addition to its ability to bind oxygen, it also has a nitrite reductase activity whereby it regulates the production of bioactive nitric oxide. Under stress conditions, like hypoxia and anoxia, it also protects cells against reactive oxygen species thanks to its pseudoperoxidase activity. The chain is Myoglobin (MB) from Uria lomvia (Thick-billed murre).